Reading from the N-terminus, the 165-residue chain is Large ribosomal subunit protein uL10 (165 aa).

Belongs to the universal ribosomal protein uL10 family. As to quaternary structure, part of the ribosomal stalk of the 50S ribosomal subunit. The N-terminus interacts with L11 and the large rRNA to form the base of the stalk. The C-terminus forms an elongated spine to which L12 dimers bind in a sequential fashion forming a multimeric L10(L12)X complex.

Its function is as follows. Forms part of the ribosomal stalk, playing a central role in the interaction of the ribosome with GTP-bound translation factors. This chain is Large ribosomal subunit protein uL10, found in Serratia proteamaculans (strain 568).